The primary structure comprises 559 residues: Prolyl 4-hydroxylase subunit alpha-1 (559 aa).

The signal sequence occupies residues 1-16 (MRLALLVLATIGYAVA). Asn-158 carries N-linked (GlcNAc...) asparagine glycosylation. Residues 404-512 (TAEELQIANY…KWVSNKWIHE (109 aa)) form the Fe2OG dioxygenase domain. Residues His-422, Asp-424, and His-493 each coordinate Fe cation. 2-oxoglutarate is bound at residue Lys-503.

This sequence belongs to the P4HA family. Heterotetramer of two alpha chains and two beta chains. Exists either as a phy-1(2)/pdi-2(2) tetramer or as a phy-1/phy-2/pdi-2(2) tetramer. Fe(2+) serves as cofactor. L-ascorbate is required as a cofactor.

The protein resides in the endoplasmic reticulum lumen. The enzyme catalyses L-prolyl-[collagen] + 2-oxoglutarate + O2 = trans-4-hydroxy-L-prolyl-[collagen] + succinate + CO2. Catalyzes the post-translational formation of 4-hydroxyproline in -Xaa-Pro-Gly- sequences in collagens and other proteins. The polypeptide is Prolyl 4-hydroxylase subunit alpha-1 (dpy-18) (Caenorhabditis elegans).